A 79-amino-acid chain; its full sequence is D-alanyl carrier protein (79 aa).

The Carrier domain occupies 1–77 (MSIEETVIEL…KIVQGVEELQ (77 aa)). Serine 35 is subject to O-(pantetheine 4'-phosphoryl)serine.

Belongs to the DltC family. In terms of processing, 4'-phosphopantetheine is transferred from CoA to a specific serine of apo-DCP.

The protein localises to the cytoplasm. It functions in the pathway cell wall biogenesis; lipoteichoic acid biosynthesis. Functionally, carrier protein involved in the D-alanylation of lipoteichoic acid (LTA). The loading of thioester-linked D-alanine onto DltC is catalyzed by D-alanine--D-alanyl carrier protein ligase DltA. The DltC-carried D-alanyl group is further transferred to cell membrane phosphatidylglycerol (PG) by forming an ester bond, probably catalyzed by DltD. D-alanylation of LTA plays an important role in modulating the properties of the cell wall in Gram-positive bacteria, influencing the net charge of the cell wall. This Streptococcus pyogenes serotype M1 protein is D-alanyl carrier protein.